Here is a 335-residue protein sequence, read N- to C-terminus: NADH-quinone oxidoreductase subunit H (335 aa).

8 consecutive transmembrane segments (helical) span residues 11 to 31, 81 to 101, 114 to 134, 154 to 174, 187 to 207, 238 to 258, 270 to 290, and 307 to 327; these read VILT…CGAL, VIFT…FVVI, IGLL…LFAG, VSYE…VGSF, LWFI…GVAV, FFVG…TLFF, QLSF…FILL, and WKFC…IVLY.

It belongs to the complex I subunit 1 family. In terms of assembly, NDH-1 is composed of 13 different subunits. Subunits NuoA, H, J, K, L, M, N constitute the membrane sector of the complex.

The protein localises to the cell inner membrane. It catalyses the reaction a quinone + NADH + 5 H(+)(in) = a quinol + NAD(+) + 4 H(+)(out). NDH-1 shuttles electrons from NADH, via FMN and iron-sulfur (Fe-S) centers, to quinones in the respiratory chain. The immediate electron acceptor for the enzyme in this species is believed to be ubiquinone. Couples the redox reaction to proton translocation (for every two electrons transferred, four hydrogen ions are translocated across the cytoplasmic membrane), and thus conserves the redox energy in a proton gradient. This subunit may bind ubiquinone. This is NADH-quinone oxidoreductase subunit H from Pseudomonas putida (strain ATCC 700007 / DSM 6899 / JCM 31910 / BCRC 17059 / LMG 24140 / F1).